The following is a 295-amino-acid chain: Protease HtpX (295 aa).

2 helical membrane-spanning segments follow: residues 4–24 (ILLF…TLSL) and 41–61 (SQLL…SLFI). His-147 is a binding site for Zn(2+). Glu-148 is an active-site residue. His-151 lines the Zn(2+) pocket. 2 consecutive transmembrane segments (helical) span residues 158-178 (VTLA…ARII) and 199-219 (IATI…VMWF). Glu-224 contacts Zn(2+).

The protein belongs to the peptidase M48B family. The cofactor is Zn(2+).

It localises to the cell inner membrane. In Pseudomonas fluorescens (strain Pf0-1), this protein is Protease HtpX.